We begin with the raw amino-acid sequence, 295 residues long: Defective in cullin neddylation protein AAR3 (295 aa).

A DCUN1 domain is found at 1–180 (MDSSPVSARF…LIDDFVEHMY (180 aa)). The Nuclear localization signal motif lies at 214-221 (YRRPHTGL). The tract at residues 214–251 (YRRPHTGLRNIPGLKRKTSKKNDEEEEDEDEEVLETQN) is disordered. Over residues 237 to 247 (EEEEDEDEEVL) the composition is skewed to acidic residues.

The protein localises to the nucleus. Its function is as follows. May contribute to the neddylation of all cullins by transferring NEDD8 from N-terminally acetylated NEDD8-conjugating E2s enzyme to different cullin C-terminal domain-RBX complexes; neddylation of cullins play an essential role in the regulation of SCF-type complexes activity. Regulates responses to the synthetic auxin 2,4-dichlorophenoxyacetic acid (2,4-D) in roots, probably by modulating the SCF(TIR1) ubiquitin E3 ligase complex-mediated proteolysis. This chain is Defective in cullin neddylation protein AAR3, found in Arabidopsis thaliana (Mouse-ear cress).